The primary structure comprises 491 residues: Transcription factor unc-3 (491 aa).

Positions 66–69 (RKSN) are interaction with DNA. A C5-type zinc finger spans residues 154 to 173 (CRVLLTHEVMCSRCCEKKSC). Interaction with DNA regions lie at residues 200–207 (NCLKNAGN) and 239–242 (NNSK). Residues 240–261 (NSKHGRRTKRTDASDDSEYSES) are disordered. In terms of domain architecture, IPT/TIG spans 269–355 (PVIKALFPSE…SRGTPLRFSY (87 aa)).

Belongs to the COE family. As to quaternary structure, may homodimerise. Interacts with jmjd-3.1. May interact with GFI1 homolog pag-3.

Its subcellular location is the nucleus. In terms of biological role, transcription factor. Involved in motor neuron fate determination and maintenance, acting as an activator of gene expression in a subset of motor neurons. May act in concert with GFI1 homolog pag-3 in motor neuron fate determination. Required to maintain the expression of transcriptional repressors bnc-1 and cfi-1, which play roles in the cell fate of motor neurons. May play a role in the expression of proteins essential for axonal pathfinding and/or neuronal differentiation in both sensory and motor neurons. Cooperates with jmjd-3.1 and wdr-5.1 to ensure robust transdifferentiation of the Y rectal cell to the PDA motor neuron during larval development. The sequence is that of Transcription factor unc-3 (unc-3) from Caenorhabditis elegans.